The sequence spans 476 residues: Exodeoxyribonuclease 7 large subunit (476 aa).

This sequence belongs to the XseA family. Heterooligomer composed of large and small subunits.

Its subcellular location is the cytoplasm. It catalyses the reaction Exonucleolytic cleavage in either 5'- to 3'- or 3'- to 5'-direction to yield nucleoside 5'-phosphates.. In terms of biological role, bidirectionally degrades single-stranded DNA into large acid-insoluble oligonucleotides, which are then degraded further into small acid-soluble oligonucleotides. This Bartonella bacilliformis (strain ATCC 35685 / KC583 / Herrer 020/F12,63) protein is Exodeoxyribonuclease 7 large subunit.